Reading from the N-terminus, the 394-residue chain is Stearoyl-[acyl-carrier-protein] 9-desaturase 1, chloroplastic (394 aa).

Residues 1–37 constitute a chloroplast transit peptide; the sequence is MVMAMDRIALFSSSSSVYHHGSSHSHGSKSSRVFTIR. Fe cation-binding residues include E135, E173, H176, E226, E259, and H262.

This sequence belongs to the fatty acid desaturase type 2 family. Homodimer. Fe(2+) is required as a cofactor. In terms of tissue distribution, ubiquitously expressed.

It localises to the plastid. Its subcellular location is the chloroplast. The catalysed reaction is octadecanoyl-[ACP] + 2 reduced [2Fe-2S]-[ferredoxin] + O2 + 2 H(+) = (9Z)-octadecenoyl-[ACP] + 2 oxidized [2Fe-2S]-[ferredoxin] + 2 H2O. Its pathway is lipid metabolism; fatty acid metabolism. Functionally, converts stearoyl-ACP to oleoyl-ACP by introduction of a cis double bond between carbons 9 and 10 of the acyl chain. In Arabidopsis thaliana (Mouse-ear cress), this protein is Stearoyl-[acyl-carrier-protein] 9-desaturase 1, chloroplastic (S-ACP-DES1).